A 468-amino-acid chain; its full sequence is Glutamate--tRNA ligase (468 aa).

The 'HIGH' region motif lies at 12-22 (PSPTGFIHLGN). The short motif at 244–248 (KMSKR) is the 'KMSKS' region element. K247 serves as a coordination point for ATP.

The protein belongs to the class-I aminoacyl-tRNA synthetase family. Glutamate--tRNA ligase type 1 subfamily. In terms of assembly, monomer.

It localises to the cytoplasm. The enzyme catalyses tRNA(Glu) + L-glutamate + ATP = L-glutamyl-tRNA(Glu) + AMP + diphosphate. Catalyzes the attachment of glutamate to tRNA(Glu) in a two-step reaction: glutamate is first activated by ATP to form Glu-AMP and then transferred to the acceptor end of tRNA(Glu). In Polynucleobacter necessarius subsp. necessarius (strain STIR1), this protein is Glutamate--tRNA ligase.